The sequence spans 493 residues: F(420)H(2) dehydrogenase subunit N (493 aa).

The next 14 membrane-spanning stretches (helical) occupy residues 7–27 (LAPE…GVFL), 34–54 (ILGY…VKSF), 78–98 (LSQF…IASI), 107–127 (TEEF…VASA), 130–150 (LILL…LAGF), 165–185 (FVIG…VYGA), 205–225 (PIGI…MALV), 244–264 (ALLA…VFII), 273–293 (WQFM…VVAV), 310–330 (AGYI…GGIM), 333–353 (LAHA…VWMI), 381–401 (ALCM…AGFM), 404–424 (FVLF…IAIL), and 454–474 (IPFP…VMGL).

Belongs to the complex I subunit 2 family. The FPO complex is composed of at least 13 different subunits. FpoA, FpoH, FpoJ, FpoK, FpoL, FpoM and FpoN proteins constitute the membrane sector of the complex.

The protein localises to the cell membrane. The catalysed reaction is methanophenazine + reduced coenzyme F420-(gamma-L-Glu)(n) = dihydromethanophenazine + oxidized coenzyme F420-(gamma-L-Glu)(n) + H(+). Component of the F(420)H(2) dehydrogenase (FPO complex) which is part of the energy-conserving F(420)H(2):heterodisulfide oxidoreductase system. The membrane-bound electron transfer system of the complex plays an important role in the metabolism of methylotrophic methanogens when the organisms grow on methanol or methylamines. Catalyzes the oxidation of methanophenazine to dihydromethanophenazine. It shuttles electrons from F(420)H(2), via FAD and iron-sulfur (Fe-S) centers, to methanophenazine (an electron carrier in the membrane). It couples the redox reaction to proton translocation (for every two electrons transferred, two hydrogen ions are translocated across the cytoplasmic membrane), and thus conserves the redox energy in a proton gradient. It also catalyzes the oxidation of F(420)H(2) with quinones such as 2,3-dimethyl-1,4-naphthoquinone, 2-methyl-1,4-naphthoquinone and tetramethyl-p-benzoquinone. This is F(420)H(2) dehydrogenase subunit N (fpoN) from Methanosarcina mazei (strain ATCC BAA-159 / DSM 3647 / Goe1 / Go1 / JCM 11833 / OCM 88) (Methanosarcina frisia).